We begin with the raw amino-acid sequence, 116 residues long: uncharacterized protein (116 aa).

Residues 1–15 (MKKYFLILASFMLVA) form the signal peptide.

This is an uncharacterized protein from Haemophilus influenzae (strain ATCC 51907 / DSM 11121 / KW20 / Rd).